Reading from the N-terminus, the 394-residue chain is Na(+)/H(+) antiporter NhaA (394 aa).

A run of 11 helical transmembrane segments spans residues 14 to 34 (AGGILLLIAALLAMLCANSVF), 59 to 79 (LLMWINDGFMAVFFILVGMEV), 95 to 115 (IFPAFAAIGGMVVPALIYWFI), 125 to 145 (GWAIPMATDIAFALGIVALLS), 155 to 175 (FLLALAIIDDIGAIIVIALFF), 177 to 197 (NELSMLALIIASIAIMILITM), 204 to 224 (GIIHYVIVGTILWASVLKSGV), 258 to 278 (WCAFAILPLFAFSNAGVSLAG), 292 to 312 (ITLGLLIGKPVGVFSFCYLAV), 328 to 348 (VFAIAVLCGIGFTMSVFIAGL), and 362 to 382 (LSRLGILIGTSIAAIVGYILL).

Belongs to the NhaA Na(+)/H(+) (TC 2.A.33) antiporter family.

It is found in the cell inner membrane. The catalysed reaction is Na(+)(in) + 2 H(+)(out) = Na(+)(out) + 2 H(+)(in). Na(+)/H(+) antiporter that extrudes sodium in exchange for external protons. In Haemophilus ducreyi (strain 35000HP / ATCC 700724), this protein is Na(+)/H(+) antiporter NhaA.